Here is a 221-residue protein sequence, read N- to C-terminus: Large ribosomal subunit protein uL4 (221 aa).

The tract at residues 56-83 (HATKTRGMVSGGGRKPWKQKGTGRARQG) is disordered.

The protein belongs to the universal ribosomal protein uL4 family. In terms of assembly, part of the 50S ribosomal subunit.

Functionally, one of the primary rRNA binding proteins, this protein initially binds near the 5'-end of the 23S rRNA. It is important during the early stages of 50S assembly. It makes multiple contacts with different domains of the 23S rRNA in the assembled 50S subunit and ribosome. In terms of biological role, forms part of the polypeptide exit tunnel. The protein is Large ribosomal subunit protein uL4 of Bifidobacterium adolescentis (strain ATCC 15703 / DSM 20083 / NCTC 11814 / E194a).